Consider the following 660-residue polypeptide: Long chain acyl-CoA synthetase 1 (660 aa).

225 to 236 (IMYTSGTSGDPK) contacts ATP. A fatty acid-binding region spans residues 492 to 516 (DGWFHTGDIGEILPNGVLKIIDRKK).

Belongs to the ATP-dependent AMP-binding enzyme family. Requires Mg(2+) as cofactor. As to expression, epidermal-specific expression along the entire stem. In cauline leaves, was expressed over the entire leaf surface, most strongly in trichomes and guard cells, but not in mesophyll cells. In flowers, the expression was detected in the stigma and filaments of the stamens, and in the carpel was expressed specifically in ovaries. In roots, was expressed in primary and lateral roots, but not in the root tips.

It localises to the endoplasmic reticulum. It catalyses the reaction a long-chain fatty acid + ATP + CoA = a long-chain fatty acyl-CoA + AMP + diphosphate. Its pathway is lipid metabolism; fatty acid metabolism. Activation of long-chain fatty acids for both synthesis of cellular lipids, and degradation via beta-oxidation. Acts in both the wax and cutin pathways. Preferentially uses palmitate, palmitoleate, linoleate and eicosenoate. Seems to have a specific activity against very long-chain fatty acid (VLCFA) class with acids longer than 24 carbons (C(24)). This chain is Long chain acyl-CoA synthetase 1 (LACS1), found in Arabidopsis thaliana (Mouse-ear cress).